A 338-amino-acid polypeptide reads, in one-letter code: Fructose-1,6-bisphosphatase 1 (338 aa).

Residue Ala-2 is modified to N-acetylalanine. Residues 18–22 and 28–32 contribute to the AMP site; these read VMEEG and TGEMT. Residues Asp-69 and Glu-98 each coordinate Mg(2+). 113 to 114 contributes to the AMP binding site; it reads KY. Asp-119, Leu-121, and Asp-122 together coordinate Mg(2+). Residue 122-125 coordinates substrate; that stretch reads DGSS. Arg-141 is an AMP binding site. Lys-151 bears the N6-succinyllysine mark. Substrate-binding positions include 213–216, 244–249, Tyr-265, and 275–277; these read NEGY, RYVGSM, and KLR. Residues Tyr-216, Tyr-245, and Tyr-265 each carry the phosphotyrosine modification. Glu-281 provides a ligand contact to Mg(2+).

Belongs to the FBPase class 1 family. In terms of assembly, homotetramer. Mg(2+) serves as cofactor.

The catalysed reaction is beta-D-fructose 1,6-bisphosphate + H2O = beta-D-fructose 6-phosphate + phosphate. The protein operates within carbohydrate biosynthesis; gluconeogenesis. With respect to regulation, subject to complex allosteric regulation. The enzyme can assume an active R-state, or an inactive T-state. Intermediate conformations may exist. AMP acts as an allosteric inhibitor. AMP binding affects the turnover of bound substrate and not the affinity for substrate. Fructose 2,6-bisphosphate acts as a competitive inhibitor. Fructose 2,6-bisphosphate and AMP have synergistic effects. Its function is as follows. Catalyzes the hydrolysis of fructose 1,6-bisphosphate to fructose 6-phosphate in the presence of divalent cations, acting as a rate-limiting enzyme in gluconeogenesis. Plays a role in regulating glucose sensing and insulin secretion of pancreatic beta-cells. Appears to modulate glycerol gluconeogenesis in liver. Important regulator of appetite and adiposity; increased expression of the protein in liver after nutrient excess increases circulating satiety hormones and reduces appetite-stimulating neuropeptides and thus seems to provide a feedback mechanism to limit weight gain. The protein is Fructose-1,6-bisphosphatase 1 (FBP1) of Oryctolagus cuniculus (Rabbit).